The chain runs to 261 residues: tRNA pseudouridine synthase A (261 aa).

Aspartate 51 (nucleophile) is an active-site residue. Tyrosine 109 lines the substrate pocket.

Belongs to the tRNA pseudouridine synthase TruA family. As to quaternary structure, homodimer.

The enzyme catalyses uridine(38/39/40) in tRNA = pseudouridine(38/39/40) in tRNA. Functionally, formation of pseudouridine at positions 38, 39 and 40 in the anticodon stem and loop of transfer RNAs. This is tRNA pseudouridine synthase A from Shewanella baltica (strain OS185).